The chain runs to 612 residues: E3 ubiquitin-protein ligase synoviolin (612 aa).

Residues 1–4 (MFRT) are Cytoplasmic-facing. The interval 1–251 (MFRTAVMMAA…LFAIRPMYLA (251 aa)) is involved in FAM8A1 interaction. The helical transmembrane segment at 5 to 25 (AVMMAASLALTGAVVAHAYYL) threads the bilayer. An interaction with SEL1L region spans residues 21 to 42 (HAYYLKHQFYPTVVYLTKSSPS). Residues 26-41 (KHQFYPTVVYLTKSSP) are Lumenal-facing. Residues 42–62 (SMAVLYIQAFVLVFLLGKVMG) traverse the membrane as a helical segment. Over 63-98 (KVFFGQLRAAEMEHLLERSWYAVTETCLAFTVFRDD) the chain is Cytoplasmic. Residues 99 to 119 (FSPRFVALFTLLLFLKCFHWL) traverse the membrane as a helical segment. Over 120–140 (AEDRVDFMERSPNISWLFHCR) the chain is Lumenal. The helical transmembrane segment at 141-161 (IVSLMFLLGILDFLFVSHAYH) threads the bilayer. The Cytoplasmic portion of the chain corresponds to 162-169 (SILTRGAS). A helical transmembrane segment spans residues 170–190 (VQLVFGFEYAILMTMVLTIFI). The Lumenal segment spans residues 191 to 224 (KYVLHSVDLQSENPWDNKAVYMLYTELFTGFIKV). The chain crosses the membrane as a helical span at residues 225-245 (LLYMAFMTIMIKVHTFPLFAI). The tract at residues 236–270 (KVHTFPLFAIRPMYLAMRQFKKAVTDAIMSRRAIR) is interaction with p53/TP53. The Cytoplasmic portion of the chain corresponds to 246 to 612 (RPMYLAMRQF…LQKLESPVAH (367 aa)). The Zn(2+) site is built by Cys-291, Cys-294, Cys-307, His-309, His-312, Cys-315, Cys-326, and Cys-329. Residues 291–330 (CIICREEMVTGAKRLPCNHIFHTSCLRSWFQRQQTCPTCR) form an RING-type; atypical zinc finger. Disordered regions lie at residues 337–375 (SLPA…GLLP) and 393–449 (PVPP…PGFP). Composition is skewed to pro residues over residues 341–375 (QSPP…GLLP) and 393–409 (PVPP…PPPT). The span at 416–434 (PSGAATTTAAGTSTSAPAP) shows a compositional bias: low complexity. Positions 435-449 (GSVPGPEAGPAPGFP) are enriched in pro residues. The interval 474–529 (GFAGLTPEELRALEGHERQHLEARLQSLRNIHTLLDAAMLQINQYLTVLASLGPPR) is HAF-H domain; necessary to form higher-order Hrd1 complexes. The tract at residues 530 to 612 (PATSVNPTEE…LQKLESPVAH (83 aa)) is disordered. The segment covering 539–559 (ETASTVVSAAPSTSAPSSEAP) has biased composition (low complexity). Residues 560–570 (TPSPGASPPIP) are compositionally biased toward pro residues. Residues 586-595 (ELPEDGEPDA) show a composition bias toward acidic residues. Ser-608 is subject to Phosphoserine.

It belongs to the HRD1 family. Homodimer. Interacts with p53/TP53. Interacts with HTT. Component of the HRD1 complex, which comprises at least SYNV1/HRD1, DERL1/2, FAM8A1, HERPUD1/HERP, OS9, SEL1L and UBE2J1. FAM8A1 is stabilized by interaction with SYNV1, which prevents its proteasomal degradation. OS9 and UBE2J1 recruitment to the complex may be mediated by SEL1L. SYNV1 assembles with SEL1L and FAM8A1 through its transmembrane domains, but interaction with its cytoplasmic domain is required to confer stability to FAM8A1 and enhance recruitment of HERPUD1. The HRD1 complex also associates with VIMP and may transfer misfolded proteins from the endoplasmic reticulum to VCP. May form a complex with ERLEC1; HSPA5; OS9 and SEL1L. Interacts with VCP. Interacts with UBXN6. Interacts with BAG6. Interacts with NFE2L1. Interacts (via N-terminus) with components of the pre-B cell receptor, including IGLL1 and VPREB1A. Interacts with CREB3L3; this interaction leads to CREB3L3 ubiquitination and proteasomal degradation. In terms of processing, auto-ubiquitinated. Deubiquitinated by USP19. Widely expressed, with highest levels in bone, spleen, lung and testis. In the brain, present in neurons but not in glial cells. Up-regulated in synovial tissues from mice with collagen-induced arthritis (at protein level). Expressed in the liver.

It localises to the endoplasmic reticulum membrane. The enzyme catalyses S-ubiquitinyl-[E2 ubiquitin-conjugating enzyme]-L-cysteine + [acceptor protein]-L-lysine = [E2 ubiquitin-conjugating enzyme]-L-cysteine + N(6)-ubiquitinyl-[acceptor protein]-L-lysine.. The protein operates within protein modification; protein ubiquitination. Its function is as follows. E3 ubiquitin-protein ligase which accepts ubiquitin specifically from endoplasmic reticulum-associated UBC7 E2 ligase and transfers it to substrates, promoting their degradation. Component of the endoplasmic reticulum quality control (ERQC) system also called ER-associated degradation (ERAD) involved in ubiquitin-dependent degradation of misfolded endoplasmic reticulum proteins. Also promotes the degradation of normal but naturally short-lived proteins such as SGK. Protects cells from ER stress-induced apoptosis. Sequesters p53/TP53 in the cytoplasm and promotes its degradation, thereby negatively regulating its biological function in transcription, cell cycle regulation and apoptosis. Required for embryogenesis. Mediates the ubiquitination and subsequent degradation of cytoplasmic NFE2L1. During the early stage of B cell development, required for degradation of the pre-B cell receptor (pre-BCR) complex, hence supporting further differentiation into mature B cells. In Mus musculus (Mouse), this protein is E3 ubiquitin-protein ligase synoviolin (Syvn1).